The sequence spans 504 residues: uncharacterized protein (504 aa).

Residues 1-212 (MFMKSKAAGS…LYKTQDPVLD (212 aa)) constitute a propeptide that is removed on maturation.

This is an uncharacterized protein from Deinococcus radiodurans (strain ATCC 13939 / DSM 20539 / JCM 16871 / CCUG 27074 / LMG 4051 / NBRC 15346 / NCIMB 9279 / VKM B-1422 / R1).